Reading from the N-terminus, the 299-residue chain is MDCKILVLGAGGLGCEILKNLTMLSFVKQVHIVDIDTIELTNLNRQFLFCDKDIGKPKAQVAAQYVNTRFPQLEVVAHVQDLTTLPPSFYKDFQFIISGLDAIEPRRFINETLVKLTLESNYEICIPFIDGGTEGLKGHVKTIIPGITACWECSIDTLPSQQDTVPMCTIANNPRCIEHVVEYVSTIQYPDLNIESTADMEFLLEKCCERAAQFSISTEKLSTSFILGIIKSIIPSVSTTNAMVAATCCTQMVKIYNDLIDLENGNNFTLINCSEGCFMYSFKFERLPDCTVCSNSNSN.

An ATP-binding site is contributed by 12-37 (GLGCEILKNLTMLSFVKQVHIVDIDT). Residue cysteine 168 is the Glycyl thioester intermediate of the active site.

This sequence belongs to the ubiquitin-activating E1 family. UBA3 subfamily. Heterodimer of UBA3 and ULA1. Interacts with NEDD8 and UBC12.

The enzyme catalyses ATP + [NEDD8 protein] + [E1 NEDD8-activating enzyme]-L-cysteine = AMP + diphosphate + [E1 NEDD8-activating enzyme]-S-[NEDD8 protein]-yl-L-cysteine.. Its pathway is protein modification; protein neddylation. Functionally, catalytic subunit of the dimeric UBA3-ULA1 E1 enzyme. E1 activates NEDD8/RUB1 by first adenylating its C-terminal glycine residue with ATP, thereafter linking this residue to the side chain of the catalytic cysteine, yielding a NEDD8-UBA3 thioester and free AMP. E1 finally transfers NEDD8 to the catalytic cysteine of UBC12. This is NEDD8-activating enzyme E1 catalytic subunit (UBA3) from Saccharomyces cerevisiae (strain ATCC 204508 / S288c) (Baker's yeast).